The following is a 194-amino-acid chain: Fibroblast growth factor 7 (194 aa).

The N-terminal stretch at 1-31 (MRKWILTRILPTPLYRPCFHLVCLVGTISLA) is a signal peptide. 2 N-linked (GlcNAc...) asparagine glycosylation sites follow: Asn45 and Asn149.

Belongs to the heparin-binding growth factors family. As to quaternary structure, interacts with FGFBP1. Interacts with FGFR2. Affinity between fibroblast growth factors (FGFs) and their receptors is increased by heparan sulfate glycosaminoglycans that function as coreceptors.

In terms of biological role, growth factor active on keratinocytes. Possible major paracrine effector of normal epithelial cell proliferation. The sequence is that of Fibroblast growth factor 7 (Fgf7) from Rattus norvegicus (Rat).